Consider the following 354-residue polypeptide: Neutral protease 2 homolog SNOG_02177 (354 aa).

Residues 1 to 19 (MKFQILSVAALASLASAVS) form the signal peptide. The propeptide occupies 20 to 182 (DALDKRDSPL…WIDLAKRTIV (163 aa)). Intrachain disulfides connect cysteine 186–cysteine 257 and cysteine 264–cysteine 282. An N-linked (GlcNAc...) asparagine glycan is attached at asparagine 214. A Zn(2+)-binding site is contributed by histidine 306. Glutamate 307 is an active-site residue. Histidine 310 is a binding site for Zn(2+).

The protein belongs to the peptidase M35 family. Zn(2+) is required as a cofactor.

The protein localises to the secreted. The enzyme catalyses Preferential cleavage of bonds with hydrophobic residues in P1'. Also 3-Asn-|-Gln-4 and 8-Gly-|-Ser-9 bonds in insulin B chain.. Its function is as follows. Secreted metalloproteinase that allows assimilation of proteinaceous substrates. Shows high activities on basic nuclear substrates such as histone and protamine. The chain is Neutral protease 2 homolog SNOG_02177 from Phaeosphaeria nodorum (strain SN15 / ATCC MYA-4574 / FGSC 10173) (Glume blotch fungus).